Reading from the N-terminus, the 555-residue chain is uncharacterized protein (555 aa).

ABC transporter domains follow at residues 4 to 244 (VKVK…PPYK) and 255 to 547 (IQVR…ARFM). ATP is bound by residues 36-43 (GKSGAGKS) and 292-299 (GPSGVGKT).

It belongs to the ABC transporter superfamily.

This is an uncharacterized protein from Methanocaldococcus jannaschii (strain ATCC 43067 / DSM 2661 / JAL-1 / JCM 10045 / NBRC 100440) (Methanococcus jannaschii).